The primary structure comprises 195 residues: NADH dehydrogenase [ubiquinone] iron-sulfur protein 3 (195 aa).

The protein belongs to the complex I 30 kDa subunit family. As to quaternary structure, complex I is composed of about 45 different subunits. This is a component of the iron-sulfur (IP) fragment of the enzyme.

It localises to the mitochondrion inner membrane. It carries out the reaction a ubiquinone + NADH + 5 H(+)(in) = a ubiquinol + NAD(+) + 4 H(+)(out). Functionally, core subunit of the mitochondrial membrane respiratory chain NADH dehydrogenase (Complex I) that is believed to belong to the minimal assembly required for catalysis. Complex I functions in the transfer of electrons from NADH to the respiratory chain. The immediate electron acceptor for the enzyme is believed to be ubiquinone. In Marchantia polymorpha (Common liverwort), this protein is NADH dehydrogenase [ubiquinone] iron-sulfur protein 3 (NAD9).